A 23-amino-acid polypeptide reads, in one-letter code: Aurein-4.3 (23 aa).

Belongs to the frog skin active peptide (FSAP) family. Aurein subfamily. Expressed by the skin dorsal glands.

The protein resides in the secreted. Functionally, has no antimicrobial or anticancer activity. This chain is Aurein-4.3, found in Ranoidea aurea (Green and golden bell frog).